We begin with the raw amino-acid sequence, 122 residues long: Small ribosomal subunit protein bS6 (122 aa).

This sequence belongs to the bacterial ribosomal protein bS6 family.

Functionally, binds together with bS18 to 16S ribosomal RNA. The sequence is that of Small ribosomal subunit protein bS6 from Neisseria meningitidis serogroup C (strain 053442).